The sequence spans 270 residues: Phospholysine phosphohistidine inorganic pyrophosphate phosphatase (270 aa).

Residues Asp-14 and Ser-16 each coordinate Mg(2+). Substrate-binding positions include 14–16, 52–53, and Lys-187; these read DVS and TN. Asp-212 provides a ligand contact to Mg(2+).

Belongs to the HAD-like hydrolase superfamily. Mg(2+) is required as a cofactor.

It is found in the cytoplasm. The protein resides in the nucleus. The enzyme catalyses diphosphate + H2O = 2 phosphate + H(+). Its function is as follows. Phosphatase that hydrolyzes imidodiphosphate, 3-phosphohistidine and 6-phospholysine. Has broad substrate specificity and can also hydrolyze inorganic diphosphate, but with lower efficiency. The polypeptide is Phospholysine phosphohistidine inorganic pyrophosphate phosphatase (lhpp) (Xenopus laevis (African clawed frog)).